The sequence spans 427 residues: MSRSETLFASAQTHIPGGVNSPVRAFRSVGGTPLFLKHAEGAYVIDEDDKRYVDYVGSWGPMILGHSHPQVLDAVRRQLEHGLSYGAPTAMETEMAELVCRLVPSMEMVRMVSSGTEATMSAIRLARGYTGRDAIIKFEGCYHGHSDSLLVKAGSGALTQGVPSSAGVPADFAKHTLTLAYNDLDEVEATLKEKGEQVACIIVEPVAGNMNCVPPAPGFLEGLRRLCDAHGVVLIFDEVMTGFRVALGGAQAYYGVTPDLSTFGKIIGGGMPVGCFGGKRAIMERIAPLGPVYQAGTLSGNPLAMAAGLTTLELISRPGFHDELGAYTSRMLQGLQDRADAAGIPFVTTQVGGMFGLYFSGADDIVTFADVMASDADRFKRFFHLMLEGGVYLAPSAFEAGFTSIAHGDKELAITLDAAERAFAKLK.

Lys265 carries the post-translational modification N6-(pyridoxal phosphate)lysine.

It belongs to the class-III pyridoxal-phosphate-dependent aminotransferase family. HemL subfamily. In terms of assembly, homodimer. Requires pyridoxal 5'-phosphate as cofactor.

Its subcellular location is the cytoplasm. The enzyme catalyses (S)-4-amino-5-oxopentanoate = 5-aminolevulinate. The protein operates within porphyrin-containing compound metabolism; protoporphyrin-IX biosynthesis; 5-aminolevulinate from L-glutamyl-tRNA(Glu): step 2/2. This Stutzerimonas stutzeri (strain A1501) (Pseudomonas stutzeri) protein is Glutamate-1-semialdehyde 2,1-aminomutase.